The chain runs to 75 residues: Exodeoxyribonuclease 7 small subunit (75 aa).

This sequence belongs to the XseB family. In terms of assembly, heterooligomer composed of large and small subunits.

It localises to the cytoplasm. The enzyme catalyses Exonucleolytic cleavage in either 5'- to 3'- or 3'- to 5'-direction to yield nucleoside 5'-phosphates.. Its function is as follows. Bidirectionally degrades single-stranded DNA into large acid-insoluble oligonucleotides, which are then degraded further into small acid-soluble oligonucleotides. This is Exodeoxyribonuclease 7 small subunit from Elusimicrobium minutum (strain Pei191).